A 197-amino-acid chain; its full sequence is 7-methyl-GTP pyrophosphatase (197 aa).

Catalysis depends on Asp69, which acts as the Proton acceptor.

It belongs to the Maf family. YceF subfamily. A divalent metal cation serves as cofactor.

Its subcellular location is the cytoplasm. The catalysed reaction is N(7)-methyl-GTP + H2O = N(7)-methyl-GMP + diphosphate + H(+). Its function is as follows. Nucleoside triphosphate pyrophosphatase that hydrolyzes 7-methyl-GTP (m(7)GTP). May have a dual role in cell division arrest and in preventing the incorporation of modified nucleotides into cellular nucleic acids. The sequence is that of 7-methyl-GTP pyrophosphatase from Pectobacterium atrosepticum (strain SCRI 1043 / ATCC BAA-672) (Erwinia carotovora subsp. atroseptica).